The primary structure comprises 221 residues: Imidazoleglycerol-phosphate dehydratase (221 aa).

Belongs to the imidazoleglycerol-phosphate dehydratase family.

The enzyme catalyses D-erythro-1-(imidazol-4-yl)glycerol 3-phosphate = 3-(imidazol-4-yl)-2-oxopropyl phosphate + H2O. It participates in amino-acid biosynthesis; L-histidine biosynthesis; L-histidine from 5-phospho-alpha-D-ribose 1-diphosphate: step 6/9. This chain is Imidazoleglycerol-phosphate dehydratase (HIS3), found in Kluyveromyces lactis (strain ATCC 8585 / CBS 2359 / DSM 70799 / NBRC 1267 / NRRL Y-1140 / WM37) (Yeast).